The sequence spans 315 residues: Aspartate carbamoyltransferase catalytic subunit (315 aa).

Residues Arg64 and Thr65 each coordinate carbamoyl phosphate. Position 93 (Lys93) interacts with L-aspartate. Residues Arg114, His142, and Gln145 each contribute to the carbamoyl phosphate site. Residues Arg175 and Arg237 each coordinate L-aspartate. Residues Leu276 and Pro277 each coordinate carbamoyl phosphate.

Belongs to the aspartate/ornithine carbamoyltransferase superfamily. ATCase family. As to quaternary structure, heterooligomer of catalytic and regulatory chains.

The catalysed reaction is carbamoyl phosphate + L-aspartate = N-carbamoyl-L-aspartate + phosphate + H(+). It functions in the pathway pyrimidine metabolism; UMP biosynthesis via de novo pathway; (S)-dihydroorotate from bicarbonate: step 2/3. Catalyzes the condensation of carbamoyl phosphate and aspartate to form carbamoyl aspartate and inorganic phosphate, the committed step in the de novo pyrimidine nucleotide biosynthesis pathway. The polypeptide is Aspartate carbamoyltransferase catalytic subunit (Thermofilum pendens (strain DSM 2475 / Hrk 5)).